The chain runs to 237 residues: 2-C-methyl-D-erythritol 4-phosphate cytidylyltransferase (237 aa).

The protein belongs to the IspD/TarI cytidylyltransferase family. IspD subfamily.

The catalysed reaction is 2-C-methyl-D-erythritol 4-phosphate + CTP + H(+) = 4-CDP-2-C-methyl-D-erythritol + diphosphate. Its pathway is isoprenoid biosynthesis; isopentenyl diphosphate biosynthesis via DXP pathway; isopentenyl diphosphate from 1-deoxy-D-xylulose 5-phosphate: step 2/6. Functionally, catalyzes the formation of 4-diphosphocytidyl-2-C-methyl-D-erythritol from CTP and 2-C-methyl-D-erythritol 4-phosphate (MEP). In Vibrio vulnificus (strain CMCP6), this protein is 2-C-methyl-D-erythritol 4-phosphate cytidylyltransferase.